A 131-amino-acid chain; its full sequence is D-ribose pyranase (131 aa).

H20 serves as the catalytic Proton donor. Substrate-binding positions include D28, H98, and 120-122 (YAN).

The protein belongs to the RbsD / FucU family. RbsD subfamily. In terms of assembly, homodecamer.

It localises to the cytoplasm. The enzyme catalyses beta-D-ribopyranose = beta-D-ribofuranose. Its pathway is carbohydrate metabolism; D-ribose degradation; D-ribose 5-phosphate from beta-D-ribopyranose: step 1/2. Its function is as follows. Catalyzes the interconversion of beta-pyran and beta-furan forms of D-ribose. This Bacillus cereus (strain B4264) protein is D-ribose pyranase.